Here is a 215-residue protein sequence, read N- to C-terminus: Histidine biosynthesis bifunctional protein HisIE (215 aa).

Positions 1–126 are phosphoribosyl-AMP cyclohydrolase; sequence MSHSDLPLAN…GHKSPPPADM (126 aa). Positions 127 to 215 are phosphoribosyl-ATP pyrophosphohydrolase; sequence LTELARVIGD…VYRKLGDRRR (89 aa).

This sequence in the N-terminal section; belongs to the PRA-CH family. The protein in the C-terminal section; belongs to the PRA-PH family.

It localises to the cytoplasm. It catalyses the reaction 1-(5-phospho-beta-D-ribosyl)-ATP + H2O = 1-(5-phospho-beta-D-ribosyl)-5'-AMP + diphosphate + H(+). The catalysed reaction is 1-(5-phospho-beta-D-ribosyl)-5'-AMP + H2O = 1-(5-phospho-beta-D-ribosyl)-5-[(5-phospho-beta-D-ribosylamino)methylideneamino]imidazole-4-carboxamide. Its pathway is amino-acid biosynthesis; L-histidine biosynthesis; L-histidine from 5-phospho-alpha-D-ribose 1-diphosphate: step 2/9. It participates in amino-acid biosynthesis; L-histidine biosynthesis; L-histidine from 5-phospho-alpha-D-ribose 1-diphosphate: step 3/9. This chain is Histidine biosynthesis bifunctional protein HisIE (hisI), found in Synechocystis sp. (strain ATCC 27184 / PCC 6803 / Kazusa).